We begin with the raw amino-acid sequence, 186 residues long: Nucleoside diphosphate kinase 6 (186 aa).

K19, F68, R96, T102, R116, and N126 together coordinate ATP. H129 (pros-phosphohistidine intermediate) is an active-site residue.

The protein belongs to the NDK family. The cofactor is Mg(2+). Expressed at a moderately low level in many tissues. Most abundant in kidney, prostate, ovary, intestine, and spleen.

The catalysed reaction is a 2'-deoxyribonucleoside 5'-diphosphate + ATP = a 2'-deoxyribonucleoside 5'-triphosphate + ADP. It carries out the reaction a ribonucleoside 5'-diphosphate + ATP = a ribonucleoside 5'-triphosphate + ADP. In terms of biological role, major role in the synthesis of nucleoside triphosphates other than ATP. The ATP gamma phosphate is transferred to the NDP beta phosphate via a ping-pong mechanism, using a phosphorylated active-site intermediate. Inhibitor of p53-induced apoptosis. The sequence is that of Nucleoside diphosphate kinase 6 (NME6) from Homo sapiens (Human).